Reading from the N-terminus, the 101-residue chain is Small ribosomal subunit protein uS14 (101 aa).

Belongs to the universal ribosomal protein uS14 family. Part of the 30S ribosomal subunit. Contacts proteins S3 and S10.

In terms of biological role, binds 16S rRNA, required for the assembly of 30S particles and may also be responsible for determining the conformation of the 16S rRNA at the A site. The polypeptide is Small ribosomal subunit protein uS14 (Ehrlichia ruminantium (strain Welgevonden)).